We begin with the raw amino-acid sequence, 229 residues long: Potassium/proton antiporter CemA (229 aa).

3 consecutive transmembrane segments (helical) span residues 7 to 27 (FSPI…YLSF), 106 to 126 (MILR…FYIW), and 189 to 209 (IISG…KYWI).

Belongs to the CemA family.

It is found in the plastid membrane. It carries out the reaction K(+)(in) + H(+)(out) = K(+)(out) + H(+)(in). Functionally, may be involved in proton extrusion. The polypeptide is Potassium/proton antiporter CemA (Cuscuta reflexa (Southern Asian dodder)).